The chain runs to 529 residues: Glucocorticoid modulatory element-binding protein 2 (529 aa).

The SAND domain maps to 80-162 (EEGENLEAEI…RKIMDSGELD (83 aa)). C109 provides a ligand contact to Zn(2+). Positions 135, 139, 142, and 153 each coordinate DNA. K154 participates in a covalent cross-link: Glycyl lysine isopeptide (Lys-Gly) (interchain with G-Cter in SUMO1); alternate. Residue K154 forms a Glycyl lysine isopeptide (Lys-Gly) (interchain with G-Cter in SUMO2); alternate linkage. H166, C170, and C174 together coordinate Zn(2+). Residues 244–347 (LLDEVIQEFQ…HLSNVLMTLT (104 aa)) are a coiled coil. S372 carries the phosphoserine modification.

As to quaternary structure, homodimer, and heterodimer of GMEB1 and GMEB2. Interacts with the glucocorticoid receptor (NR3C1). May interact with CREB-binding protein (CBP).

The protein localises to the nucleus. Its subcellular location is the cytoplasm. Its function is as follows. Trans-acting factor that binds to glucocorticoid modulatory elements (GME) present in the TAT (tyrosine aminotransferase) promoter and increases sensitivity to low concentrations of glucocorticoids. Also binds to the transferrin receptor promoter. This chain is Glucocorticoid modulatory element-binding protein 2 (Gmeb2), found in Rattus norvegicus (Rat).